The following is a 349-amino-acid chain: Protein O-mannose kinase (349 aa).

The Cytoplasmic portion of the chain corresponds to 1 to 19; the sequence is MGQQHGTRNGLTHRELPRG. A helical; Signal-anchor for type II membrane protein transmembrane segment spans residues 20-42; sequence VGLLLAMALMNVALYLCLDQLFI. Topologically, residues 43-349 are lumenal; that stretch reads SPGRSTADSR…TVMSQTKEML (307 aa). N-linked (GlcNAc...) asparagine glycosylation is found at asparagine 66, asparagine 164, and asparagine 219. The 270-residue stretch at 80 to 349 folds into the Protein kinase domain; sequence VRQLKRVGEG…TVMSQTKEML (270 aa).

This sequence belongs to the protein kinase superfamily. Ser/Thr protein kinase family. STKL subfamily.

Its subcellular location is the endoplasmic reticulum membrane. It catalyses the reaction 3-O-[beta-D-GalNAc-(1-&gt;3)-beta-D-GlcNAc-(1-&gt;4)-alpha-D-Man]-L-Thr-[protein] + ATP = 3-O-[beta-D-GalNAc-(1-&gt;3)-beta-D-GlcNAc-(1-&gt;4)-(O-6-P-alpha-D-Man)]-Thr-[protein] + ADP + H(+). In terms of biological role, protein O-mannose kinase that specifically mediates phosphorylation at the 6-position of an O-mannose of the trisaccharide (N-acetylgalactosamine (GalNAc)-beta-1,3-N-acetylglucosamine (GlcNAc)-beta-1,4-mannose) to generate phosphorylated O-mannosyl trisaccharide (N-acetylgalactosamine-beta-1,3-N-acetylglucosamine-beta-1,4-(phosphate-6-)mannose). Phosphorylated O-mannosyl trisaccharide is a carbohydrate structure present in alpha-dystroglycan (DAG1), which is required for binding laminin G-like domain-containing extracellular proteins with high affinity. Only shows kinase activity when the GalNAc-beta-3-GlcNAc-beta-terminus is linked to the 4-position of O-mannose, suggesting that this disaccharide serves as the substrate recognition motif. The sequence is that of Protein O-mannose kinase (Pomk) from Mus musculus (Mouse).